Consider the following 368-residue polypeptide: Carbamoyl phosphate synthase small chain (368 aa).

The tract at residues 1–178 (MKAVLGLEDG…GAECAWKGSG (178 aa)) is CPSase. The L-glutamine site is built by S45, G230, and G232. The 187-residue stretch at 182-368 (HAVVVDLGIK…KVVKVLGGDL (187 aa)) folds into the Glutamine amidotransferase type-1 domain. C257 (nucleophile) is an active-site residue. Residues F258, Q261, N299, G301, and Y302 each coordinate L-glutamine. Active-site residues include H342 and E344.

It belongs to the CarA family. Composed of two chains; the small (or glutamine) chain promotes the hydrolysis of glutamine to ammonia, which is used by the large (or ammonia) chain to synthesize carbamoyl phosphate. Tetramer of heterodimers (alpha,beta)4.

The enzyme catalyses hydrogencarbonate + L-glutamine + 2 ATP + H2O = carbamoyl phosphate + L-glutamate + 2 ADP + phosphate + 2 H(+). It catalyses the reaction L-glutamine + H2O = L-glutamate + NH4(+). It functions in the pathway amino-acid biosynthesis; L-arginine biosynthesis; carbamoyl phosphate from bicarbonate: step 1/1. It participates in pyrimidine metabolism; UMP biosynthesis via de novo pathway; (S)-dihydroorotate from bicarbonate: step 1/3. Its function is as follows. Small subunit of the glutamine-dependent carbamoyl phosphate synthetase (CPSase). CPSase catalyzes the formation of carbamoyl phosphate from the ammonia moiety of glutamine, carbonate, and phosphate donated by ATP, constituting the first step of 2 biosynthetic pathways, one leading to arginine and/or urea and the other to pyrimidine nucleotides. The small subunit (glutamine amidotransferase) binds and cleaves glutamine to supply the large subunit with the substrate ammonia. The chain is Carbamoyl phosphate synthase small chain from Methanosarcina acetivorans (strain ATCC 35395 / DSM 2834 / JCM 12185 / C2A).